The primary structure comprises 390 residues: Putative cyclin-F2-1 (390 aa).

The segment at 135–154 (YNGDDDAPAPDDSMASRPQL) is disordered.

It belongs to the cyclin family. Cyclin F subfamily.

In Oryza sativa subsp. japonica (Rice), this protein is Putative cyclin-F2-1 (CycF2-1).